Here is a 156-residue protein sequence, read N- to C-terminus: Persephin (156 aa).

Residues 1 to 21 form the signal peptide; the sequence is MAAGRLRILCLLLLSLHPSLG. Intrachain disulfides connect Cys-66/Cys-124, Cys-93/Cys-152, and Cys-97/Cys-154.

Belongs to the TGF-beta family. GDNF subfamily. As to quaternary structure, homodimer; disulfide-linked. Interacts with GFRA4 coreceptor and RET: forms a 2:2:2 ternary complex composed of PSPN ligand, GFRA4 and RET receptor.

The protein localises to the secreted. Growth factor that exhibits neurotrophic activity on mesencephalic dopaminergic and motor neurons. Acts by binding to its coreceptor, GFRA4, leading to autophosphorylation and activation of the RET receptor. The chain is Persephin from Mus musculus (Mouse).